A 102-amino-acid polypeptide reads, in one-letter code: P antigen family member 4 (102 aa).

Residues 1 to 10 (MSARVRSRSR) are compositionally biased toward basic residues. A disordered region spans residues 1-102 (MSARVRSRSR…KTKEAGDGQP (102 aa)). S7 carries the phosphoserine; by CLK2 modification. S9 carries the phosphoserine; by HIPK1 and CLK2 modification. Residues 45–85 (GQEREGTPPIEERKVEGDCQEMDLEKTRSERGDGSDVKEKT) are compositionally biased toward basic and acidic residues. T51 carries the phosphothreonine; by HIPK1 and CLK2 modification. T71 bears the Phosphothreonine; by CLK2 mark. Residues S73 and S79 each carry the phosphoserine; by CLK2 modification. Residues T85 and T94 each carry the phosphothreonine; by CLK2 modification.

It belongs to the GAGE family. In terms of assembly, interacts with JUN. HIPK1-mediated phosphorylation at Thr-51 leads to the compaction of its intrinsically disordered conformation and is critical for its ability to potentiate the transcriptional activator activity of JUN inspite of a reduced interaction with JUN. CLK2-mediated phosphorylation at multiple Ser and Thr residues attenuates its ability to potentiate JUN transcriptional activator activity. Expressed at basal lvels in the adult normal prostate gland but is highly up-regulated in the fetal prostate and prostate cancer cells. Preferentially expressed in normal male and female reproductive tissues, testis, fallopian tube, uterus, and placenta, as well as in testicular cancer, uterine cancer, cervical cancer and kidney cancer.

The protein resides in the cytoplasm. Its subcellular location is the nucleus. The protein localises to the mitochondrion. Its function is as follows. Intrinsically disordered protein that potentiates the transcriptional activator activity of JUN. Protects cells from stress-induced apoptosis by inhibiting reactive oxygen species (ROS) production and via regulation of the MAPK signaling pathway. In Homo sapiens (Human), this protein is P antigen family member 4 (PAGE4).